Here is a 635-residue protein sequence, read N- to C-terminus: Elongation factor 4 (635 aa).

A tr-type G domain is found at 11–193; sequence EKIRNFSIIA…QIVEKVPAPT (183 aa). GTP-binding positions include 23–28 and 140–143; these read DHGKST and NKID.

Belongs to the TRAFAC class translation factor GTPase superfamily. Classic translation factor GTPase family. LepA subfamily.

The protein localises to the cell membrane. It catalyses the reaction GTP + H2O = GDP + phosphate + H(+). In terms of biological role, required for accurate and efficient protein synthesis under certain stress conditions. May act as a fidelity factor of the translation reaction, by catalyzing a one-codon backward translocation of tRNAs on improperly translocated ribosomes. Back-translocation proceeds from a post-translocation (POST) complex to a pre-translocation (PRE) complex, thus giving elongation factor G a second chance to translocate the tRNAs correctly. Binds to ribosomes in a GTP-dependent manner. The sequence is that of Elongation factor 4 from Streptococcus pyogenes serotype M12 (strain MGAS2096).